Consider the following 257-residue polypeptide: Thiazole synthase (257 aa).

Lys-96 functions as the Schiff-base intermediate with DXP in the catalytic mechanism. 1-deoxy-D-xylulose 5-phosphate is bound by residues Gly-157, 184 to 185, and 206 to 207; these read AG and NT.

Belongs to the ThiG family. In terms of assembly, homotetramer. Forms heterodimers with either ThiH or ThiS.

Its subcellular location is the cytoplasm. It carries out the reaction [ThiS sulfur-carrier protein]-C-terminal-Gly-aminoethanethioate + 2-iminoacetate + 1-deoxy-D-xylulose 5-phosphate = [ThiS sulfur-carrier protein]-C-terminal Gly-Gly + 2-[(2R,5Z)-2-carboxy-4-methylthiazol-5(2H)-ylidene]ethyl phosphate + 2 H2O + H(+). It functions in the pathway cofactor biosynthesis; thiamine diphosphate biosynthesis. Catalyzes the rearrangement of 1-deoxy-D-xylulose 5-phosphate (DXP) to produce the thiazole phosphate moiety of thiamine. Sulfur is provided by the thiocarboxylate moiety of the carrier protein ThiS. In vitro, sulfur can be provided by H(2)S. The sequence is that of Thiazole synthase from Bartonella bacilliformis (strain ATCC 35685 / KC583 / Herrer 020/F12,63).